A 781-amino-acid polypeptide reads, in one-letter code: Tax1-binding protein 1 homolog A (781 aa).

Coiled-coil stretches lie at residues 148–453 (NSDI…QGDA) and 488–581 (DVEK…YMRE). Positions 441 to 465 (KLTQQQETQQGDANRNDASTETTLE) are enriched in polar residues. Disordered regions lie at residues 441–510 (KLTQ…EEEC) and 630–691 (ETRD…EAPA). Positions 484–495 (TVARDVEKSRDE) are enriched in basic and acidic residues. A compositionally biased stretch (acidic residues) spans 496–510 (EGNEQEEEDEEEEEC). A compositionally biased stretch (pro residues) spans 646 to 656 (RPPPLAPPPWG). 2 UBZ1-type zinc fingers span residues 716 to 742 (HKQC…VESH) and 743 to 769 (WRVC…VHTH). 8 residues coordinate Zn(2+): Cys-719, Cys-722, His-738, His-742, Cys-746, Cys-749, His-765, and His-769.

As to expression, little expression is observed during pectoral fin development, except for an elevated level of expression in the distal mesenchyme cells of some samples.

Its function is as follows. May have anti-apoptotic activity. The protein is Tax1-binding protein 1 homolog A of Danio rerio (Zebrafish).